Here is a 109-residue protein sequence, read N- to C-terminus: Sperm-specific class P protein 19 (109 aa).

In terms of domain architecture, MSP spans 1-109 (MSLTADPPAC…TVTIPMSATA (109 aa)).

In terms of assembly, monomer. Expressed at higher level in testis.

The chain is Sperm-specific class P protein 19 (ssp-19) from Caenorhabditis elegans.